The primary structure comprises 391 residues: Cytochrome b (391 aa).

A run of 4 helical transmembrane segments spans residues 33-53 (FGSL…FLAM), 77-98 (WLIR…YLHI), 113-133 (WSAG…GYVL), and 178-198 (FFAF…VHLL). Residues histidine 83 and histidine 97 each contribute to the heme b site. Residues histidine 182 and histidine 196 each contribute to the heme b site. Histidine 201 serves as a coordination point for a ubiquinone. 4 helical membrane passes run 226–246 (YKDL…VLFI), 288–308 (LGGV…PILH), 320–340 (LAQI…WIGG), and 347–367 (FIII…VFFP).

This sequence belongs to the cytochrome b family. The cytochrome bc1 complex contains 3 respiratory subunits (MT-CYB, CYC1 and UQCRFS1), 2 core proteins (UQCRC1 and UQCRC2) and probably 6 low-molecular weight proteins. Heme b serves as cofactor.

Its subcellular location is the mitochondrion inner membrane. In terms of biological role, component of the ubiquinol-cytochrome c reductase complex (complex III or cytochrome b-c1 complex) that is part of the mitochondrial respiratory chain. The b-c1 complex mediates electron transfer from ubiquinol to cytochrome c. Contributes to the generation of a proton gradient across the mitochondrial membrane that is then used for ATP synthesis. The chain is Cytochrome b (mt-cyb) from Kryptolebias marmoratus (Mangrove killifish).